Reading from the N-terminus, the 50-residue chain is Sperm protamine P1 (50 aa).

The protein belongs to the protamine P1 family. As to quaternary structure, cross-linked by interchain disulfide bonds around the DNA-helix. Testis.

The protein resides in the nucleus. It is found in the chromosome. In terms of biological role, protamines substitute for histones in the chromatin of sperm during the haploid phase of spermatogenesis. They compact sperm DNA into a highly condensed, stable and inactive complex. The chain is Sperm protamine P1 (PRM1) from Saimiri sciureus (Common squirrel monkey).